Consider the following 425-residue polypeptide: MEFKQGDRVRIEKNGTVYEGKVMPSMEGYITIKMKSGYNAGFSIDKVSITPLENNGEAANGGNGGKNGQKEPEPAKEKVSKPGLPKVSILSTGGTIASKIDYRTGAVTSQFTADDILAAIPELKEIADFKGRAISSILSENMDPDSWQNLARAVVEEIEAGADGIIVTHGTDTMMYSAAALSFMIETPVPIVFVGSQRSADRPSSDNAMNAICAARVAISDIAEVVVVMHGTSSDDYCEIHRGTKVRKMHTSRRDAFKSVNSLPIGTVDYDTGEIKTFIEYTGRGEKSLKFKPGMEPKCAIVKFTPGADPSVLDCYVDGGYKGLVLEGTGLGHVSTKWIPFIRRAVDAKMPVIVTSQCLNGRVCDRVYDTGRDMLKAGAIEGEDTLPETALVKLMWVLGQTDEFEKAVSMLGENLSGEINECTLR.

A disordered region spans residues 53-84 (ENNGEAANGGNGGKNGQKEPEPAKEKVSKPGL). A compositionally biased stretch (basic and acidic residues) spans 68–80 (GQKEPEPAKEKVS). In terms of domain architecture, Asparaginase/glutaminase spans 85 to 414 (PKVSILSTGG…EKAVSMLGEN (330 aa)). Catalysis depends on residues T95, T171, D172, and K248.

This sequence belongs to the asparaginase 1 family. GatD subfamily. Heterodimer of GatD and GatE.

The enzyme catalyses L-glutamyl-tRNA(Gln) + L-glutamine + ATP + H2O = L-glutaminyl-tRNA(Gln) + L-glutamate + ADP + phosphate + H(+). Allows the formation of correctly charged Gln-tRNA(Gln) through the transamidation of misacylated Glu-tRNA(Gln) in organisms which lack glutaminyl-tRNA synthetase. The reaction takes place in the presence of glutamine and ATP through an activated gamma-phospho-Glu-tRNA(Gln). The GatDE system is specific for glutamate and does not act on aspartate. The polypeptide is Glutamyl-tRNA(Gln) amidotransferase subunit D (Methanosarcina mazei (strain ATCC BAA-159 / DSM 3647 / Goe1 / Go1 / JCM 11833 / OCM 88) (Methanosarcina frisia)).